A 248-amino-acid chain; its full sequence is tRNA pseudouridine synthase A (248 aa).

The active-site Nucleophile is D53. A substrate-binding site is contributed by Y111.

Belongs to the tRNA pseudouridine synthase TruA family. In terms of assembly, homodimer.

It catalyses the reaction uridine(38/39/40) in tRNA = pseudouridine(38/39/40) in tRNA. Formation of pseudouridine at positions 38, 39 and 40 in the anticodon stem and loop of transfer RNAs. In Listeria welshimeri serovar 6b (strain ATCC 35897 / DSM 20650 / CCUG 15529 / CIP 8149 / NCTC 11857 / SLCC 5334 / V8), this protein is tRNA pseudouridine synthase A.